We begin with the raw amino-acid sequence, 91 residues long: UPF0250 protein NGK_1021 (91 aa).

It belongs to the UPF0250 family.

In Neisseria gonorrhoeae (strain NCCP11945), this protein is UPF0250 protein NGK_1021.